A 505-amino-acid chain; its full sequence is Maturase K (505 aa).

It belongs to the intron maturase 2 family. MatK subfamily.

It localises to the plastid. It is found in the chloroplast. Its function is as follows. Usually encoded in the trnK tRNA gene intron. Probably assists in splicing its own and other chloroplast group II introns. This is Maturase K from Coffea arabica (Arabian coffee).